Here is a 590-residue protein sequence, read N- to C-terminus: V-type ATP synthase alpha chain (590 aa).

231–238 lines the ATP pocket; that stretch reads GPFGSGKT.

The protein belongs to the ATPase alpha/beta chains family.

It catalyses the reaction ATP + H2O + 4 H(+)(in) = ADP + phosphate + 5 H(+)(out). In terms of biological role, produces ATP from ADP in the presence of a proton gradient across the membrane. The V-type alpha chain is a catalytic subunit. The sequence is that of V-type ATP synthase alpha chain from Clostridium botulinum (strain Langeland / NCTC 10281 / Type F).